The following is a 530-amino-acid chain: Carbohydrate sulfotransferase 2 (530 aa).

Residues 1 to 20 (MSRSSPRALPPGALPRPLPA) form a disordered region. The Cytoplasmic portion of the chain corresponds to 1 to 54 (MSRSSPRALPPGALPRPLPAAPAAVQRALLPPWPRRAGRRWPASPLGMKVFRRK). A compositionally biased stretch (pro residues) spans 8–20 (ALPPGALPRPLPA). Residues 55–75 (ALVLCAGYALLLVLTMLNLLD) form a helical; Signal-anchor for type II membrane protein membrane-spanning segment. Residues 76-530 (YKWHKEPLQQ…SKTLLRKPRL (455 aa)) are Lumenal-facing. A disordered region spans residues 97 to 128 (GAAGAGWGRPGSPPAAPPRAHSRMDPRTPYRP). Position 173 to 179 (173 to 179 (WRSGSSF)) interacts with 3'-phosphoadenylyl sulfate. Asparagine 243 is a glycosylation site (N-linked (GlcNAc...) asparagine). 332 to 340 (RDPRAVASS) is a 3'-phosphoadenylyl sulfate binding site. 2 N-linked (GlcNAc...) asparagine glycosylation sites follow: asparagine 457 and asparagine 475.

It belongs to the sulfotransferase 1 family. Gal/GlcNAc/GalNAc subfamily. As to quaternary structure, homodimer; disulfide-linked. Homodimerization is not essential for enzyme activity. In brain, it is expressed in pyramidal cells in the CA3 subregion of the hippocampus, cerebellar nucleus and Purkinje cells. Expressed in peripheral lymph nodes.

It is found in the golgi apparatus. Its subcellular location is the trans-Golgi network membrane. The enzyme catalyses 3-O-{N-acetyl-beta-D-glucosaminyl-(1-&gt;3)-beta-D-galactosyl-(1-&gt;3)-N-acetyl-alpha-D-galactosaminyl}-L-threonyl-[protein] + 3'-phosphoadenylyl sulfate = 3-O-{6-O-sulfo-N-acetyl-beta-D-glucosaminyl-(1-&gt;3)-beta-D-galactosyl-(1-&gt;3)-N-acetyl-alpha-D-galactosaminyl}-L-threonyl-[protein] + adenosine 3',5'-bisphosphate + H(+). It catalyses the reaction 3-O-{N-acetyl-beta-D-glucosaminyl-(1-&gt;3)-beta-D-galactosyl-(1-&gt;3)-N-acetyl-alpha-D-galactosaminyl}-L-seryl-[protein] + 3'-phosphoadenylyl sulfate = 3-O-{6-O-sulfo-N-acetyl-beta-D-glucosaminyl-(1-&gt;3)-beta-D-galactosyl-(1-&gt;3)-N-acetyl-alpha-D-galactosaminyl}-L-seryl-[protein] + adenosine 3',5'-bisphosphate + H(+). The catalysed reaction is a 3-O-{beta-D-galactosyl-(1-&gt;3)-[N-acetyl-beta-D-glucosaminyl-(1-&gt;6)]-N-acetyl-alpha-D-galactosaminyl}-L-threonyl-[protein] + 3'-phosphoadenylyl sulfate = 3-O-{beta-D-galactosyl-(1-&gt;3)-[6-O-sulfo-N-acetyl-beta-D-glucosaminyl-(1-&gt;6)]-N-acetyl-alpha-D-galactosaminyl}-L-threonyl-[protein] + adenosine 3',5'-bisphosphate + H(+). It carries out the reaction 3-O-{beta-D-galactosyl-(1-&gt;3)-[N-acetyl-beta-D-glucosaminyl-(1-&gt;6)]-N-acetyl-alpha-D-galactosaminyl}-L-seryl-[protein] + 3'-phosphoadenylyl sulfate = 3-O-{beta-D-galactosyl-(1-&gt;3)-[6-O-sulfo-N-acetyl-beta-D-glucosaminyl-(1-&gt;6)]-N-acetyl-alpha-D-galactosaminyl}-L-seryl-[protein] + adenosine 3',5'-bisphosphate + H(+). Its pathway is protein modification; carbohydrate sulfation. Its function is as follows. Sulfotransferase that utilizes 3'-phospho-5'-adenylyl sulfate (PAPS) as sulfonate donor to catalyze the transfer of sulfate to position 6 of non-reducing N-acetylglucosamine (GlcNAc) residues within keratan-like structures on N-linked glycans and within mucin-associated glycans that can ultimately serve as SELL ligands. SELL ligands are present in high endothelial cells (HEVs) and play a central role in lymphocyte homing at sites of inflammation. Participates in biosynthesis of the SELL ligand sialyl 6-sulfo Lewis X and in lymphocyte homing to Peyer patches. Has no activity toward O-linked sugars. Its substrate specificity may be influenced by its subcellular location. Sulfates GlcNAc residues at terminal, non-reducing ends of oligosaccharide chains. This is Carbohydrate sulfotransferase 2 (Chst2) from Mus musculus (Mouse).